The primary structure comprises 406 residues: Arginine biosynthesis bifunctional protein ArgJ (406 aa).

Positions 156, 182, 193, 279, 401, and 406 each coordinate substrate. T193 serves as the catalytic Nucleophile.

The protein belongs to the ArgJ family. In terms of assembly, heterotetramer of two alpha and two beta chains.

The protein localises to the cytoplasm. It carries out the reaction N(2)-acetyl-L-ornithine + L-glutamate = N-acetyl-L-glutamate + L-ornithine. The catalysed reaction is L-glutamate + acetyl-CoA = N-acetyl-L-glutamate + CoA + H(+). The protein operates within amino-acid biosynthesis; L-arginine biosynthesis; L-ornithine and N-acetyl-L-glutamate from L-glutamate and N(2)-acetyl-L-ornithine (cyclic): step 1/1. It functions in the pathway amino-acid biosynthesis; L-arginine biosynthesis; N(2)-acetyl-L-ornithine from L-glutamate: step 1/4. In terms of biological role, catalyzes two activities which are involved in the cyclic version of arginine biosynthesis: the synthesis of N-acetylglutamate from glutamate and acetyl-CoA as the acetyl donor, and of ornithine by transacetylation between N(2)-acetylornithine and glutamate. In Bacillus licheniformis (strain ATCC 14580 / DSM 13 / JCM 2505 / CCUG 7422 / NBRC 12200 / NCIMB 9375 / NCTC 10341 / NRRL NRS-1264 / Gibson 46), this protein is Arginine biosynthesis bifunctional protein ArgJ.